A 334-amino-acid chain; its full sequence is MNRYYDKNADLNIIKGMKVSIIGYGSQGHAHANNLKDSGVEVVVALRADSASTEKAFVAGLTVKSIEEATDWADLVMVLAPDEFQAKIYTNSIEPNLKQGATLAFAHGFNIHYNRIIPRTDLDVIMIAPKAPGHTVRSEFVKGGGIPDLIAVFQDASGNAKATSLSYACAIGGGRTGILETSFKDETETDLFGEQVVLCGGTTALVQAGFETLVEAGYEPEMAYFECLHELKLIVDLMYEGGIANMRYSISNTAEYGDVTRGPRIVTADTKTEMKKILSEIQDGTFAKEFVANVDELPAHRDVQRKHQIEQVGESLRSMMPWINKNKIVDQSKN.

The region spanning 1-181 is the KARI N-terminal Rossmann domain; that stretch reads MNRYYDKNAD…GGGRTGILET (181 aa). NADP(+)-binding positions include 24–27, arginine 47, serine 50, serine 52, and 82–85; these read YGSQ and DEFQ. The active site involves histidine 107. Glycine 133 serves as a coordination point for NADP(+). Positions 182–323 constitute a KARI C-terminal knotted domain; that stretch reads SFKDETETDL…ESLRSMMPWI (142 aa). The Mg(2+) site is built by aspartate 190, glutamate 194, glutamate 226, and glutamate 230. Serine 251 lines the substrate pocket.

It belongs to the ketol-acid reductoisomerase family. Mg(2+) is required as a cofactor.

It catalyses the reaction (2R)-2,3-dihydroxy-3-methylbutanoate + NADP(+) = (2S)-2-acetolactate + NADPH + H(+). It carries out the reaction (2R,3R)-2,3-dihydroxy-3-methylpentanoate + NADP(+) = (S)-2-ethyl-2-hydroxy-3-oxobutanoate + NADPH + H(+). Its pathway is amino-acid biosynthesis; L-isoleucine biosynthesis; L-isoleucine from 2-oxobutanoate: step 2/4. It participates in amino-acid biosynthesis; L-valine biosynthesis; L-valine from pyruvate: step 2/4. Functionally, involved in the biosynthesis of branched-chain amino acids (BCAA). Catalyzes an alkyl-migration followed by a ketol-acid reduction of (S)-2-acetolactate (S2AL) to yield (R)-2,3-dihydroxy-isovalerate. In the isomerase reaction, S2AL is rearranged via a Mg-dependent methyl migration to produce 3-hydroxy-3-methyl-2-ketobutyrate (HMKB). In the reductase reaction, this 2-ketoacid undergoes a metal-dependent reduction by NADPH to yield (R)-2,3-dihydroxy-isovalerate. In Ruthia magnifica subsp. Calyptogena magnifica, this protein is Ketol-acid reductoisomerase (NADP(+)).